A 682-amino-acid polypeptide reads, in one-letter code: Potassium-transporting ATPase ATP-binding subunit (682 aa).

Helical transmembrane passes span 15 to 35, 42 to 62, 66 to 86, 233 to 253, and 257 to 277; these read AALF…AKLA, SPVM…TASG, AGFG…GNFA, LTFL…GVTL, and LLIA…LPAI. Asp-310 acts as the 4-aspartylphosphate intermediate in catalysis. ATP contacts are provided by residues Asp-347, Glu-351, 377–384, and Lys-395; that span reads FTAQTRMS. Residues Asp-518 and Asp-522 each coordinate Mg(2+). Transmembrane regions (helical) follow at residues 588–608, 616–636, and 662–682; these read FAIL…LNVM, AVLA…PLAL, and VLLP…VLGA.

It belongs to the cation transport ATPase (P-type) (TC 3.A.3) family. Type IA subfamily. As to quaternary structure, the system is composed of three essential subunits: KdpA, KdpB and KdpC.

It localises to the cell inner membrane. It catalyses the reaction K(+)(out) + ATP + H2O = K(+)(in) + ADP + phosphate + H(+). In terms of biological role, part of the high-affinity ATP-driven potassium transport (or Kdp) system, which catalyzes the hydrolysis of ATP coupled with the electrogenic transport of potassium into the cytoplasm. This subunit is responsible for energy coupling to the transport system and for the release of the potassium ions to the cytoplasm. In Xanthomonas axonopodis pv. citri (strain 306), this protein is Potassium-transporting ATPase ATP-binding subunit.